Reading from the N-terminus, the 371-residue chain is 4-hydroxy-3-methylbut-2-en-1-yl diphosphate synthase (flavodoxin) (371 aa).

Positions 270, 273, 305, and 312 each coordinate [4Fe-4S] cluster.

It belongs to the IspG family. [4Fe-4S] cluster serves as cofactor.

The enzyme catalyses (2E)-4-hydroxy-3-methylbut-2-enyl diphosphate + oxidized [flavodoxin] + H2O + 2 H(+) = 2-C-methyl-D-erythritol 2,4-cyclic diphosphate + reduced [flavodoxin]. Its pathway is isoprenoid biosynthesis; isopentenyl diphosphate biosynthesis via DXP pathway; isopentenyl diphosphate from 1-deoxy-D-xylulose 5-phosphate: step 5/6. Its function is as follows. Converts 2C-methyl-D-erythritol 2,4-cyclodiphosphate (ME-2,4cPP) into 1-hydroxy-2-methyl-2-(E)-butenyl 4-diphosphate. The sequence is that of 4-hydroxy-3-methylbut-2-en-1-yl diphosphate synthase (flavodoxin) from Chromohalobacter salexigens (strain ATCC BAA-138 / DSM 3043 / CIP 106854 / NCIMB 13768 / 1H11).